Reading from the N-terminus, the 475-residue chain is Aspartyl/glutamyl-tRNA(Asn/Gln) amidotransferase subunit B (475 aa).

It belongs to the GatB/GatE family. GatB subfamily. As to quaternary structure, heterotrimer of A, B and C subunits.

It catalyses the reaction L-glutamyl-tRNA(Gln) + L-glutamine + ATP + H2O = L-glutaminyl-tRNA(Gln) + L-glutamate + ADP + phosphate + H(+). It carries out the reaction L-aspartyl-tRNA(Asn) + L-glutamine + ATP + H2O = L-asparaginyl-tRNA(Asn) + L-glutamate + ADP + phosphate + 2 H(+). Allows the formation of correctly charged Asn-tRNA(Asn) or Gln-tRNA(Gln) through the transamidation of misacylated Asp-tRNA(Asn) or Glu-tRNA(Gln) in organisms which lack either or both of asparaginyl-tRNA or glutaminyl-tRNA synthetases. The reaction takes place in the presence of glutamine and ATP through an activated phospho-Asp-tRNA(Asn) or phospho-Glu-tRNA(Gln). This is Aspartyl/glutamyl-tRNA(Asn/Gln) amidotransferase subunit B from Thermodesulfovibrio yellowstonii (strain ATCC 51303 / DSM 11347 / YP87).